Reading from the N-terminus, the 914-residue chain is Chitin synthase B (914 aa).

Disordered stretches follow at residues 1–67 and 112–140; these read MAYQ…TSGY and YARS…GGGL. Positions 130 to 140 are enriched in gly residues; that stretch reads GGAGSGGGGGL. Helical transmembrane passes span 543-562, 586-606, 627-647, 662-682, 712-732, 843-863, and 882-902; these read WLNG…GRMY, ILTW…MDLV, IVNT…FILA, SFVV…YLVV, AGII…ASFM, LVTF…SDGV, and ALLW…CWFL.

This sequence belongs to the chitin synthase family. Class III subfamily.

The protein resides in the cell membrane. It catalyses the reaction [(1-&gt;4)-N-acetyl-beta-D-glucosaminyl](n) + UDP-N-acetyl-alpha-D-glucosamine = [(1-&gt;4)-N-acetyl-beta-D-glucosaminyl](n+1) + UDP + H(+). Polymerizes chitin, a structural polymer of the cell wall and septum, by transferring the sugar moiety of UDP-GlcNAc to the non-reducing end of the growing chitin polymer. Plays an important role in septal growth or maintenance. Mediates colony spore formation. The protein is Chitin synthase B of Aspergillus niger (strain ATCC MYA-4892 / CBS 513.88 / FGSC A1513).